Consider the following 102-residue polypeptide: UPF0473 protein SAS1551 (102 aa).

It belongs to the UPF0473 family.

The polypeptide is UPF0473 protein SAS1551 (Staphylococcus aureus (strain MSSA476)).